The following is a 142-amino-acid chain: UPF0336 protein PPA1896 (142 aa).

It belongs to the UPF0336 family.

This is UPF0336 protein PPA1896 from Cutibacterium acnes (strain DSM 16379 / KPA171202) (Propionibacterium acnes).